A 635-amino-acid chain; its full sequence is CCR4-NOT transcription complex subunit 10 (635 aa).

A Phosphothreonine modification is found at Thr-45. A coiled-coil region spans residues 131–165 (LVARLEALEKAMAALVATLQLQLLLATNQLNRAEA). 2 disordered regions span residues 396-416 (EERQ…QSAG) and 450-474 (SEDV…DNNF). Residues 456–470 (PEPKDPTQESWRHPQ) show a composition bias toward basic and acidic residues.

The protein belongs to the CNOT10 family. Component of the CCR4-NOT complex. CNOT10 and CNOT11 form a subcomplex docked to the CNOT1 scaffold.

The protein localises to the cytoplasm. It is found in the nucleus. Functionally, component of the CCR4-NOT complex which is one of the major cellular mRNA deadenylases and is linked to various cellular processes including bulk mRNA degradation, miRNA-mediated repression, translational repression during translational initiation and general transcription regulation. Additional complex functions may be a consequence of its influence on mRNA expression. Is not required for association of CNOT7 to the CCR4-NOT complex. The polypeptide is CCR4-NOT transcription complex subunit 10 (Not10) (Drosophila melanogaster (Fruit fly)).